Consider the following 146-residue polypeptide: Ubiquitin-conjugating enzyme E2 variant 1D (146 aa).

Residues 13 to 146 (PRNFRLLEEL…LVQPPEGTCF (134 aa)) form the UBC core domain.

Belongs to the ubiquitin-conjugating enzyme family. In terms of assembly, heterodimer with UBC35 or UBC36. In terms of tissue distribution, expressed in roots, shoots, leaves, stems, flowers and pollen.

Has no ubiquitin ligase activity on its own. The heterodimer with UBC catalyzes the synthesis of non-canonical poly-ubiquitin chains that are linked through 'Lys-63'. This type of poly-ubiquitination does not lead to protein degradation by the proteasome. Mediates transcriptional activation of target genes. May play a role in the control of progress through the cell cycle and differentiation. Involved in the error-free DNA repair pathway and contributes to the survival of cells after DNA damage. This chain is Ubiquitin-conjugating enzyme E2 variant 1D (UEV1D), found in Arabidopsis thaliana (Mouse-ear cress).